The primary structure comprises 76 residues: Conotoxin Cal29b (76 aa).

Positions 1–43 are cleaved as a signal peptide; the sequence is MKLTCVLIVAVLILAACQFTAANMARYGKTQIARSDVKSIDAR.

This sequence belongs to the conotoxin O1 superfamily. In terms of processing, may contain 4 disulfide bonds. Expressed by the venom duct.

It localises to the secreted. Its function is as follows. Is able to inhibit the growth of Mycobacterium tuberculosis (MIC=0.22-3.52 uM against strain H37Rv and 2 multidrug-resistant strains). May also show neurotoxic activity. This is Conotoxin Cal29b from Californiconus californicus (California cone).